We begin with the raw amino-acid sequence, 328 residues long: Hairy/enhancer-of-split related with YRPW motif-like protein (328 aa).

Positions 1–54 (MKRPREPSGSDSESDGPIDVGREGELSQMARPLSTPSPSQMQARKKRRGIIEKR) are disordered. The segment at 42 to 111 (QARKKRRGII…GGTGFFDARA (70 aa)) is transcriptional repression and interaction with NCOR1 and SIN3A. In terms of domain architecture, bHLH spans 43 to 98 (ARKKRRGIIEKRRRDRINSSLSELRRLVPTAFEKQGSSKLEKAEVLQMTVDHLKML). The region spanning 116–153 (FRSIGFRECLTEVIRYLGVLEGPSSRADPVRIRLLSHL) is the Orange domain. The tract at residues 236 to 272 (LLPSRGASSTRRARPLERPAAPLPAAPSGRATRGSHM) is disordered.

The protein belongs to the HEY family. As to quaternary structure, self-associates. Interacts with GATA4, GATA6, HES1, HEY1 and HEY2. Interacts with HDAC1, NCOR1 and SIN3A.

It localises to the nucleus. Downstream effector of Notch signaling which may be required for cardiovascular development. Transcriptional repressor which binds preferentially to the canonical E box sequence 5'-CACGTG-3'. Represses transcription by the cardiac transcriptional activators GATA4 and GATA6. This is Hairy/enhancer-of-split related with YRPW motif-like protein (HEYL) from Bos taurus (Bovine).